Consider the following 89-residue polypeptide: Small ribosomal subunit protein uS15 (89 aa).

Positions 1–10 (MSITAERKAE) are enriched in basic and acidic residues. The disordered stretch occupies residues 1–24 (MSITAERKAEVIQGNANKAGDTGS).

Belongs to the universal ribosomal protein uS15 family. As to quaternary structure, part of the 30S ribosomal subunit. Forms a bridge to the 50S subunit in the 70S ribosome, contacting the 23S rRNA.

One of the primary rRNA binding proteins, it binds directly to 16S rRNA where it helps nucleate assembly of the platform of the 30S subunit by binding and bridging several RNA helices of the 16S rRNA. In terms of biological role, forms an intersubunit bridge (bridge B4) with the 23S rRNA of the 50S subunit in the ribosome. This Rhodopseudomonas palustris (strain HaA2) protein is Small ribosomal subunit protein uS15.